Reading from the N-terminus, the 532-residue chain is T-complex protein 1 subunit epsilon (532 aa).

Belongs to the TCP-1 chaperonin family. As to quaternary structure, component of the T-complex protein 1 (TCP1) complex.

It is found in the cytoplasm. Its function is as follows. Molecular chaperone; assists the folding of proteins upon ATP hydrolysis. The sequence is that of T-complex protein 1 subunit epsilon (CCT5) from Encephalitozoon cuniculi (strain GB-M1) (Microsporidian parasite).